A 455-amino-acid chain; its full sequence is 2-succinylbenzoate--CoA ligase (455 aa).

This sequence belongs to the ATP-dependent AMP-binding enzyme family. MenE subfamily.

It catalyses the reaction 2-succinylbenzoate + ATP + CoA = 2-succinylbenzoyl-CoA + AMP + diphosphate. It functions in the pathway quinol/quinone metabolism; 1,4-dihydroxy-2-naphthoate biosynthesis; 1,4-dihydroxy-2-naphthoate from chorismate: step 5/7. It participates in quinol/quinone metabolism; menaquinone biosynthesis. Converts 2-succinylbenzoate (OSB) to 2-succinylbenzoyl-CoA (OSB-CoA). This Salmonella typhimurium (strain LT2 / SGSC1412 / ATCC 700720) protein is 2-succinylbenzoate--CoA ligase.